A 441-amino-acid polypeptide reads, in one-letter code: LLLLGHASTSTRGFSGNSFKSDLIPQSRRSHSVYGTPGSIRISSPSVPSAIVSSYSSTLSSALPSSSYGGNSFSSSTSFSSGGSDLLLGTSGKEAMQNLNDRLASYLDKVRSLEGKNHELELKIKDWYSQVIPGTGGPDARDYGHLEKEIEDLQNKVNNCRVDTATILLHIDNAKLAADDFRNKYENEQSLRLGVEADINGLKRVLDELALAKADTDMQIEGLRDELDYLKKNHEEDMKAASSGIAGQVNVELDAAPGTNLLDELDACRRDHEAMLDQMRREAERWYNEKAKDVKDKAGEAQETLVSHTSEISDLKRSIQSLEIELQTQLARKSSLESTLAGTESQYGMRIQEIQMKINVFEDQISDLRAKMEFQSQEYQMLLDVKQRLEAEIATYRMLLDSEDSKGSIINHKILTAIEKLVDGIVLSTEVLEKQIPVLSY.

The segment at 2–91 is head; it reads LLLGHASTST…GGSDLLLGTS (90 aa). A coil 1A region spans residues 92–127; it reads GKEAMQNLNDRLASYLDKVRSLEGKNHELELKIKDW. The 316-residue stretch at 92-407 folds into the IF rod domain; it reads GKEAMQNLND…MLLDSEDSKG (316 aa). Positions 128 to 149 are linker 1; sequence YSQVIPGTGGPDARDYGHLEKE. Residues 150 to 241 form a coil 1B region; sequence IEDLQNKVNN…KNHEEDMKAA (92 aa). Residues 242–261 form a linker 12 region; sequence SSGIAGQVNVELDAAPGTNL. The coil 2 stretch occupies residues 262–403; the sequence is LDELDACRRD…ATYRMLLDSE (142 aa). The tract at residues 404–441 is tail; that stretch reads DSKGSIINHKILTAIEKLVDGIVLSTEVLEKQIPVLSY.

This sequence belongs to the intermediate filament family. Heterotetramer of two type I and two type II keratins. Expressed in skin.

The polypeptide is Keratin, type I cytoskeletal 15 (KRT15) (Protopterus aethiopicus (Marbled lungfish)).